We begin with the raw amino-acid sequence, 281 residues long: 2,3,4,5-tetrahydropyridine-2,6-dicarboxylate N-succinyltransferase (281 aa).

The protein belongs to the transferase hexapeptide repeat family.

It is found in the cytoplasm. It carries out the reaction (S)-2,3,4,5-tetrahydrodipicolinate + succinyl-CoA + H2O = (S)-2-succinylamino-6-oxoheptanedioate + CoA. Its pathway is amino-acid biosynthesis; L-lysine biosynthesis via DAP pathway; LL-2,6-diaminopimelate from (S)-tetrahydrodipicolinate (succinylase route): step 1/3. The protein is 2,3,4,5-tetrahydropyridine-2,6-dicarboxylate N-succinyltransferase of Afipia carboxidovorans (strain ATCC 49405 / DSM 1227 / KCTC 32145 / OM5) (Oligotropha carboxidovorans).